Consider the following 1240-residue polypeptide: MARRRIRSRIRKSHFYTFRCLRPKTLDDQGPHVINGPGYTRIVHCNQPHLHLATKLIRYRSNYVSTTRYNLLTFLPKCLYEQFHRVANFYFLVAAILSVFPLSPFNKWSMIAPLVFVVGLSMGKEALEDWRRFMQDVEVNSRKASVHKGSGDFGRRTWKRIRVGDIVRVEKDEFFPADLLLLSSSYEDGICYVETMNLDGETNLKVKRCLDATLALEKDESFQNFSGTIKCEDPNPNLYTFVGNLECDGQVYPLDPNQILLRDSKLRNTAYVYGVVVFTGHDTKVMQNSTKSPSKRSRIEKRMDYIIYTLFALLLTVSFISSLGFAVMTKLLMAEWWYLRPDKPESLTNPTNPLYAWVVHLITALLLYGYLIPISLYVSIEVVKVLQAHFINQDLQLYDSESGTPAQARTSNLNEELGQVDTILSDKTGTLTCNQMDFLKCSIAGTSYGVRASEVELAAAKQMAMDLEEKGEEVANLSMNKGRTQRYAKLASKTSSDFELETVVTASDEKDQKQNTGVKGFSFEDNRLMNENWLNEPNSDDILMFFRILAVCHTAIPEVDEDTGMCTYEAESPDEVAFLVASREFGFEFTKRTQSSVFIAERFSSSGQPVDREYKILNLLDFTSKRKRMSAIVRDEEGQILLLCKGADSIIFERLSKSGKEYLGATSKHLNVYGEAGLRTLALGYRKLDETEYAAWNSEFHKAKTSVGADRDEMLEKVSDMMEKELILVGATAVEDKLQKGVPQCIDNLAQAGLKIWVLTGDKMETAINIGYACSLLRQGMKQISISLTNVEESSQNSEAAAKESILMQITNASQMIKIEKDPHAAFALIIDGKTLTYALKDDVKYQFLALAVDCASVICCRVSPKQKALVTRLAKEGTGKTTLAIGDGANDVGMIQEADIGVGISGVEGMQAVMASDFSIAQFRFLERLLVVHGHWCYKRIAQMICYFFYKNITFGLTLFYFECFTGFSGQSIYNDSYLLLFNVVLTSLPVISLGVFEQDVPSDVCLQFPALYQQGPKNLFFDWYRILGWMGNGVYASIVIFTLNLGIFHVQSFRSDGQTADMNAMGTAMFTCIIWAVNVQIALTMSHFTWIQHVMIWGSIGAWYVFLALYGMLPVKLSGNIFHMLVEILAPAPIFWLTSLLVIAATTLPYLFHISYQRSVNPLDHHIIQEIKHFRIDVEDERMWKREKSKAREKTKIGFTARVDAKIRQLRGRLQRKHSVLSVMSGTSSNDTPSSNSQ.

At 1–75 the chain is on the cytoplasmic side; that stretch reads MARRRIRSRI…TTRYNLLTFL (75 aa). The helical transmembrane segment at 76-97 threads the bilayer; it reads PKCLYEQFHRVANFYFLVAAIL. Over 98–101 the chain is Extracellular; that stretch reads SVFP. Residues 102–124 form a helical membrane-spanning segment; it reads LSPFNKWSMIAPLVFVVGLSMGK. The Cytoplasmic portion of the chain corresponds to 125-306; the sequence is EALEDWRRFM…SRIEKRMDYI (182 aa). The chain crosses the membrane as a helical span at residues 307–328; that stretch reads IYTLFALLLTVSFISSLGFAVM. At 329–360 the chain is on the extracellular side; the sequence is TKLLMAEWWYLRPDKPESLTNPTNPLYAWVVH. A helical membrane pass occupies residues 361-378; sequence LITALLLYGYLIPISLYV. Residues 379-943 lie on the Cytoplasmic side of the membrane; the sequence is SIEVVKVLQA…HGHWCYKRIA (565 aa). Asp-426 acts as the 4-aspartylphosphate intermediate in catalysis. Lys-625 is covalently cross-linked (Glycyl lysine isopeptide (Lys-Gly) (interchain with G-Cter in ubiquitin)). Residues Asp-888 and Asp-892 each coordinate Mg(2+). The helical transmembrane segment at 944–963 threads the bilayer; sequence QMICYFFYKNITFGLTLFYF. Topologically, residues 964 to 977 are extracellular; it reads ECFTGFSGQSIYND. A helical membrane pass occupies residues 978–997; that stretch reads SYLLLFNVVLTSLPVISLGV. Topologically, residues 998–1027 are cytoplasmic; sequence FEQDVPSDVCLQFPALYQQGPKNLFFDWYR. Residues 1028–1050 form a helical membrane-spanning segment; the sequence is ILGWMGNGVYASIVIFTLNLGIF. At 1051 to 1063 the chain is on the extracellular side; sequence HVQSFRSDGQTAD. A helical transmembrane segment spans residues 1064-1086; the sequence is MNAMGTAMFTCIIWAVNVQIALT. The Cytoplasmic segment spans residues 1087-1092; that stretch reads MSHFTW. Residues 1093–1113 form a helical membrane-spanning segment; sequence IQHVMIWGSIGAWYVFLALYG. Residues 1114–1130 lie on the Extracellular side of the membrane; sequence MLPVKLSGNIFHMLVEI. Residues 1131-1155 form a helical membrane-spanning segment; sequence LAPAPIFWLTSLLVIAATTLPYLFH. The Cytoplasmic portion of the chain corresponds to 1156–1240; sequence ISYQRSVNPL…SNDTPSSNSQ (85 aa).

Belongs to the cation transport ATPase (P-type) (TC 3.A.3) family. Type IV subfamily.

It localises to the cell membrane. The protein localises to the endomembrane system. It carries out the reaction ATP + H2O + phospholipidSide 1 = ADP + phosphate + phospholipidSide 2.. Involved in transport of phospholipids and in regulation of pollen plasma membrane lipid asymmetry. The chain is Phospholipid-transporting ATPase 6 from Arabidopsis thaliana (Mouse-ear cress).